A 362-amino-acid chain; its full sequence is Chromobox protein homolog 8 (362 aa).

Residues 11-69 (FAAEALLKRRIRKGRMEYLVKWKGWSQKYSTWEPEENILDARLLAAFEEREREMELYGP) form the Chromo domain. Residues 90 to 100 (KTYEFRSDSTR) are compositionally biased toward basic and acidic residues. The disordered stretch occupies residues 90 to 197 (KTYEFRSDST…LGEPSAGLGE (108 aa)). Residue serine 110 is modified to Phosphoserine. The segment covering 142–162 (DPPRDRDRERDRGTSRVDDKP) has biased composition (basic and acidic residues). Serine 164 and serine 229 each carry phosphoserine. At tyrosine 234 the chain carries Phosphotyrosine. Serine 238, serine 284, serine 305, and serine 325 each carry phosphoserine.

Component of a PRC1-like complex. Interacts with RING1, RNF2, PCGF1, PCGF2, PCGF3, BMI1, PCGF5, PCGF6 and PHC2. Interacts with histone H3. Interacts with MLLT3. Interacts with PHC2. Interacts (via chromodomain) with single-stranded RNA.

It is found in the nucleus. It localises to the chromosome. Functionally, component of a Polycomb group (PcG) multiprotein PRC1-like complex, a complex class required to maintain the transcriptionally repressive state of many genes, including Hox genes, throughout development. PcG PRC1 complex acts via chromatin remodeling and modification of histones; it mediates monoubiquitination of histone H2A 'Lys-119', rendering chromatin heritably changed in its expressibility. This chain is Chromobox protein homolog 8 (Cbx8), found in Mus musculus (Mouse).